A 98-amino-acid chain; its full sequence is MKIAHPAFAGTLESSDLQVRIEPNNDGGIELVLDSTVEQQFGHAIRQVVLHTLDAMQVRDALVTIEDKGALDCVIRARVQAAVMRACDVQNIEWSQLS.

O-(phosphoribosyl dephospho-coenzyme A)serine is present on serine 14.

Belongs to the CitD family. Oligomer with a subunit composition of (alpha,beta,gamma)6.

The protein localises to the cytoplasm. Functionally, covalent carrier of the coenzyme of citrate lyase. This is Citrate lyase acyl carrier protein from Vibrio cholerae serotype O1 (strain ATCC 39315 / El Tor Inaba N16961).